A 202-amino-acid chain; its full sequence is dITP/XTP pyrophosphatase (202 aa).

A substrate-binding site is contributed by 10-15; the sequence is TGNAGK. D46 and D75 together coordinate Mg(2+). Residue D75 is the Proton acceptor of the active site. Residues S76, 160 to 163, K183, and 188 to 189 each bind substrate; these read FGYD and HR.

Belongs to the HAM1 NTPase family. As to quaternary structure, homodimer. It depends on Mg(2+) as a cofactor.

It catalyses the reaction XTP + H2O = XMP + diphosphate + H(+). The catalysed reaction is dITP + H2O = dIMP + diphosphate + H(+). It carries out the reaction ITP + H2O = IMP + diphosphate + H(+). In terms of biological role, pyrophosphatase that catalyzes the hydrolysis of nucleoside triphosphates to their monophosphate derivatives, with a high preference for the non-canonical purine nucleotides XTP (xanthosine triphosphate), dITP (deoxyinosine triphosphate) and ITP. Seems to function as a house-cleaning enzyme that removes non-canonical purine nucleotides from the nucleotide pool, thus preventing their incorporation into DNA/RNA and avoiding chromosomal lesions. The polypeptide is dITP/XTP pyrophosphatase (Idiomarina loihiensis (strain ATCC BAA-735 / DSM 15497 / L2-TR)).